We begin with the raw amino-acid sequence, 39 residues long: Cytochrome b6-f complex subunit 5 (39 aa).

Residues 5 to 25 form a helical membrane-spanning segment; it reads LLCGIVLGLVPITIVGLFVSA.

This sequence belongs to the PetG family. The 4 large subunits of the cytochrome b6-f complex are cytochrome b6, subunit IV (17 kDa polypeptide, PetD), cytochrome f and the Rieske protein, while the 4 small subunits are PetG, PetL, PetM and PetN. The complex functions as a dimer.

The protein resides in the cellular thylakoid membrane. Component of the cytochrome b6-f complex, which mediates electron transfer between photosystem II (PSII) and photosystem I (PSI), cyclic electron flow around PSI, and state transitions. PetG is required for either the stability or assembly of the cytochrome b6-f complex. This is Cytochrome b6-f complex subunit 5 from Prochlorococcus marinus (strain MIT 9211).